A 241-amino-acid polypeptide reads, in one-letter code: MKLEQRYEGKAKKVYATENPLEYVVEYKDDATAFNGVKRAQIVGKGQINNAITAHLFPLLEEAGVPTHFLEKLSEREQRVRAVTIIPVEVIVRNVAAGSFAKRLGLEEGTPLARPVVEYCLKSDALGDPLINTDTAVALGWASEDDLKRIRELALKVRDFLTPYFAARGIRLIDFKLEFGRTHDGQIVLADEISPDTCRFWDAATNEKLDKDRFRRDLGGVEDAYAEMLRRVTGEGGRDEG.

It belongs to the SAICAR synthetase family.

The catalysed reaction is 5-amino-1-(5-phospho-D-ribosyl)imidazole-4-carboxylate + L-aspartate + ATP = (2S)-2-[5-amino-1-(5-phospho-beta-D-ribosyl)imidazole-4-carboxamido]succinate + ADP + phosphate + 2 H(+). It participates in purine metabolism; IMP biosynthesis via de novo pathway; 5-amino-1-(5-phospho-D-ribosyl)imidazole-4-carboxamide from 5-amino-1-(5-phospho-D-ribosyl)imidazole-4-carboxylate: step 1/2. This is Phosphoribosylaminoimidazole-succinocarboxamide synthase from Deinococcus geothermalis (strain DSM 11300 / CIP 105573 / AG-3a).